The chain runs to 241 residues: 3-dehydroquinate dehydratase (241 aa).

3-dehydroquinate-binding positions include 35 to 37 and arginine 70; that span reads ELR. The Proton donor/acceptor role is filled by histidine 133. Lysine 160 (schiff-base intermediate with substrate) is an active-site residue. Residues arginine 202 and glutamine 225 each contribute to the 3-dehydroquinate site.

Belongs to the type-I 3-dehydroquinase family. Homodimer.

It carries out the reaction 3-dehydroquinate = 3-dehydroshikimate + H2O. It functions in the pathway metabolic intermediate biosynthesis; chorismate biosynthesis; chorismate from D-erythrose 4-phosphate and phosphoenolpyruvate: step 3/7. Functionally, involved in the third step of the chorismate pathway, which leads to the biosynthesis of aromatic amino acids. Catalyzes the cis-dehydration of 3-dehydroquinate (DHQ) and introduces the first double bond of the aromatic ring to yield 3-dehydroshikimate. This is 3-dehydroquinate dehydratase from Staphylococcus haemolyticus (strain JCSC1435).